The primary structure comprises 578 residues: Triokinase/FMN cyclase (578 aa).

The 328-residue stretch at Ser-9–Trp-336 folds into the DhaK domain. Residues Gly-56–His-59, Lys-109, and Asp-114 contribute to the dihydroxyacetone site. Catalysis depends on His-221, which acts as the Tele-hemiaminal-histidine intermediate. The 200-residue stretch at Lys-372–Glu-571 folds into the DhaL domain. ATP-binding positions include Asp-401–Cys-404, Ser-446–Ser-447, Gly-486, and Thr-494–Met-495. Phosphoserine is present on residues Ser-511 and Ser-545. Asp-556–Gly-558 is a binding site for ATP.

This sequence belongs to the dihydroxyacetone kinase (DAK) family. Homodimer. Interacts with IFIH1 (via the CARD domains), the interaction is inhibited by viral infection. It depends on Mg(2+) as a cofactor. Mn(2+) serves as cofactor. Requires Co(2+) as cofactor.

The catalysed reaction is dihydroxyacetone + ATP = dihydroxyacetone phosphate + ADP + H(+). The enzyme catalyses D-glyceraldehyde + ATP = D-glyceraldehyde 3-phosphate + ADP + H(+). It catalyses the reaction FAD = riboflavin cyclic-4',5'-phosphate + AMP + H(+). Its activity is regulated as follows. Each activity is inhibited by the substrate(s) of the other. Catalyzes both the phosphorylation of dihydroxyacetone and of glyceraldehyde, and the splitting of ribonucleoside diphosphate-X compounds among which FAD is the best substrate. Represses IFIH1-mediated cellular antiviral response. This Rattus norvegicus (Rat) protein is Triokinase/FMN cyclase (Tkfc).